Consider the following 317-residue polypeptide: Ribosomal RNA small subunit methyltransferase H (317 aa).

S-adenosyl-L-methionine contacts are provided by residues 30-32 (GGH), Asp-50, Tyr-78, Asp-95, and Gln-102.

This sequence belongs to the methyltransferase superfamily. RsmH family.

The protein localises to the cytoplasm. The enzyme catalyses cytidine(1402) in 16S rRNA + S-adenosyl-L-methionine = N(4)-methylcytidine(1402) in 16S rRNA + S-adenosyl-L-homocysteine + H(+). Specifically methylates the N4 position of cytidine in position 1402 (C1402) of 16S rRNA. This chain is Ribosomal RNA small subunit methyltransferase H, found in Nitrosomonas eutropha (strain DSM 101675 / C91 / Nm57).